Consider the following 543-residue polypeptide: Cytochrome P450 2U1 (543 aa).

Helical transmembrane passes span P32–W52, G58–P78, V261–F281, and L342–L362. A heme-binding site is contributed by C490. Residues L495–L515 traverse the membrane as a helical segment.

It belongs to the cytochrome P450 family. Heme serves as cofactor.

It localises to the endoplasmic reticulum membrane. Its subcellular location is the microsome membrane. It is found in the mitochondrion inner membrane. It carries out the reaction an omega-methyl-long-chain fatty acid + reduced [NADPH--hemoprotein reductase] + O2 = an omega-hydroxy-long-chain fatty acid + oxidized [NADPH--hemoprotein reductase] + H2O + H(+). The enzyme catalyses (5Z,8Z,11Z,14Z)-eicosatetraenoate + reduced [NADPH--hemoprotein reductase] + O2 = 19-hydroxy-(5Z,8Z,11Z,14Z)-eicosatetraenoate + oxidized [NADPH--hemoprotein reductase] + H2O + H(+). It catalyses the reaction (5Z,8Z,11Z,14Z)-eicosatetraenoate + reduced [NADPH--hemoprotein reductase] + O2 = 20-hydroxy-(5Z,8Z,11Z,14Z)-eicosatetraenoate + oxidized [NADPH--hemoprotein reductase] + H2O + H(+). The catalysed reaction is N-[(5Z,8Z,11Z,14Z)-eicosatetraenoyl]-serotonin + reduced [NADPH--hemoprotein reductase] + O2 = 2-oxo-N-[(5Z,8Z,11Z,14Z)-eicosatetraenoyl]-serotonin + oxidized [NADPH--hemoprotein reductase] + H2O + H(+). Its function is as follows. A cytochrome P450 monooxygenase involved in the metabolism of arachidonic acid and its conjugates. Mechanistically, uses molecular oxygen inserting one oxygen atom into a substrate, and reducing the second into a water molecule, with two electrons provided by NADPH via cytochrome P450 reductase (CPR; NADPH-ferrihemoprotein reductase). Acts as an omega and omega-1 hydroxylase for arachidonic acid and possibly for other long chain fatty acids. May modulate the arachidonic acid signaling pathway and play a role in other fatty acid signaling processes. May down-regulate the biological activities of N-arachidonoyl-serotonin, an endocannabinoid that has anti-nociceptive effects through inhibition of fatty acid amide hydrolase FAAH, TRPV1 receptor and T-type calcium channels. Catalyzes C-2 oxidation of the indole ring of N-arachidonoyl-serotonin forming a less active product 2-oxo-N-arachidonoyl-serotonin. The polypeptide is Cytochrome P450 2U1 (CYP2U1) (Bos taurus (Bovine)).